A 450-amino-acid polypeptide reads, in one-letter code: Phosphoglucosamine mutase (450 aa).

Ser-103 acts as the Phosphoserine intermediate in catalysis. Residues Ser-103, Asp-243, Asp-245, and Asp-247 each coordinate Mg(2+). The residue at position 103 (Ser-103) is a Phosphoserine.

Belongs to the phosphohexose mutase family. The cofactor is Mg(2+). Activated by phosphorylation.

It carries out the reaction alpha-D-glucosamine 1-phosphate = D-glucosamine 6-phosphate. In terms of biological role, catalyzes the conversion of glucosamine-6-phosphate to glucosamine-1-phosphate. This Lactobacillus delbrueckii subsp. bulgaricus (strain ATCC BAA-365 / Lb-18) protein is Phosphoglucosamine mutase.